The sequence spans 118 residues: Large ribosomal subunit protein uL24 (118 aa).

The protein belongs to the universal ribosomal protein uL24 family. In terms of assembly, part of the 50S ribosomal subunit.

Its function is as follows. One of two assembly initiator proteins, it binds directly to the 5'-end of the 23S rRNA, where it nucleates assembly of the 50S subunit. One of the proteins that surrounds the polypeptide exit tunnel on the outside of the subunit. This is Large ribosomal subunit protein uL24 from Synechococcus sp. (strain WH7803).